Here is a 709-residue protein sequence, read N- to C-terminus: Leucine-rich repeat and calponin homology domain-containing protein 1 (709 aa).

Positions 24 to 37 (LHQHHQHHQHHQHH) are enriched in basic residues. The disordered stretch occupies residues 24-49 (LHQHHQHHQHHQHHGGTGGTGFNLPL). LRR repeat units lie at residues 60 to 83 (AANS…TAPG), 86 to 108 (LSDT…ELCQ), 109 to 131 (FVSL…AIVN), 132 to 155 (LQML…LCGL), 157 to 176 (LKVL…EIGQ), 177 to 199 (LKQL…QIGQ), 200 to 223 (LKSL…LVDL), 225 to 244 (LVKF…CFRE), and 245 to 268 (MKQL…ICTK). Composition is skewed to basic and acidic residues over residues 301–312 (HQHVEDSKKDSD) and 381–390 (QEREQLAGRA). Residues 301 to 390 (HQHVEDSKKD…QEREQLAGRA (90 aa)) are disordered. 3 positions are modified to phosphoserine: S395, S518, and S522. The disordered stretch occupies residues 504–526 (SNGSQYSPNEIRENSPSVSPTAN). Residue T581 is modified to Phosphothreonine. The region spanning 589–702 (MREEKELVEQ…TTVQALLDVT (114 aa)) is the Calponin-homology (CH) domain.

In terms of assembly, interacts (via LRR repeats) with unphosphorylated DOCK8 (via DHR-2 domain); the interaction prevents the association between DOCK8 and CDC42.

The protein localises to the cytoplasm. Its function is as follows. Acts as a negative regulator of GTPase CDC42 by sequestering CDC42-guanine exchange factor DOCK8. Probably by preventing CDC42 activation, negatively regulates CD4(+) T-cell migration in response to chemokine stimulation. The protein is Leucine-rich repeat and calponin homology domain-containing protein 1 (Lrch1) of Mus musculus (Mouse).